A 117-amino-acid polypeptide reads, in one-letter code: MKLFVLLSILVWLAQPVLNRPLSIFYTKQILPRTYTPPMRELEYWCTYGKHCDFCWDCKNGICKNKVLDDMPLIVQNDYISKCSITRFIDRCMYFIEPKIPYIHYMNCSLPHIFSLI.

The first 16 residues, methionine 1 to proline 16, serve as a signal peptide directing secretion.

Belongs to the asfivirus MGF 110 family.

This is Protein MGF 110-13L from Ornithodoros (relapsing fever ticks).